A 122-amino-acid polypeptide reads, in one-letter code: Large ribosomal subunit protein uL14 (122 aa).

It belongs to the universal ribosomal protein uL14 family. As to quaternary structure, part of the 50S ribosomal subunit. Forms a cluster with proteins L3 and L19. In the 70S ribosome, L14 and L19 interact and together make contacts with the 16S rRNA in bridges B5 and B8.

Its function is as follows. Binds to 23S rRNA. Forms part of two intersubunit bridges in the 70S ribosome. The polypeptide is Large ribosomal subunit protein uL14 (Shewanella loihica (strain ATCC BAA-1088 / PV-4)).